A 355-amino-acid chain; its full sequence is MTTLTVKLGERSYPIFIQPSLLTQGNQLADYIKTDKAVLVTNDLVDPLYSQTVIDSLPSIKIEKIVIADGEQHKNLASFEHVITQLLSMSAARDTTLIALGGGVIGDLTGFVAASFQRGMPFIQIPTTLLSQVDSSVGGKTAVNHPLGKNMIGAFYQPKAVFIDTKTLQTLPAKEFSAGMAEVIKYGIIYDKAFFAWLEQNIAQLIAQDVDALQYSIARCCEIKAEIVAIDERESGLRALLNLGHTFGHAIEAEQGYGNWLHGEAVAAGMVLAAKAGQMKGWMSKEEVQRVIALIEAFSLPIAPPANMGYQTFMQHMAHDKKVQAGKLNFIVPKAIGDAVVTSELDETLLRSLLD.

NAD(+)-binding positions include 69–74 (DGEQHK), 103–107 (GVIGD), 127–128 (TT), lysine 140, lysine 149, and 167–170 (TLQT). Zn(2+) is bound by residues glutamate 182, histidine 245, and histidine 262.

This sequence belongs to the sugar phosphate cyclases superfamily. Dehydroquinate synthase family. Co(2+) is required as a cofactor. Requires Zn(2+) as cofactor. It depends on NAD(+) as a cofactor.

The protein localises to the cytoplasm. The catalysed reaction is 7-phospho-2-dehydro-3-deoxy-D-arabino-heptonate = 3-dehydroquinate + phosphate. Its pathway is metabolic intermediate biosynthesis; chorismate biosynthesis; chorismate from D-erythrose 4-phosphate and phosphoenolpyruvate: step 2/7. Functionally, catalyzes the conversion of 3-deoxy-D-arabino-heptulosonate 7-phosphate (DAHP) to dehydroquinate (DHQ). In Pseudoalteromonas atlantica (strain T6c / ATCC BAA-1087), this protein is 3-dehydroquinate synthase.